A 155-amino-acid polypeptide reads, in one-letter code: Transcription antitermination protein NusB (155 aa).

It belongs to the NusB family.

Its function is as follows. Involved in transcription antitermination. Required for transcription of ribosomal RNA (rRNA) genes. Binds specifically to the boxA antiterminator sequence of the ribosomal RNA (rrn) operons. The chain is Transcription antitermination protein NusB from Aliivibrio fischeri (strain ATCC 700601 / ES114) (Vibrio fischeri).